A 534-amino-acid chain; its full sequence is Beta-glucosidase 32 (534 aa).

The first 22 residues, 1-22 (MAIKLIALVITICVASWDSAQG), serve as a signal peptide directing secretion. A beta-D-glucoside is bound at residue Q51. An N-linked (GlcNAc...) asparagine glycan is attached at N68. A beta-D-glucoside is bound by residues H154 and 199–200 (NE). E200 acts as the Proton donor in catalysis. An intrachain disulfide couples C219 to C227. Y344 serves as a coordination point for a beta-D-glucoside. A glycan (N-linked (GlcNAc...) asparagine) is linked at N374. Residue E417 participates in a beta-D-glucoside binding. The active-site Nucleophile is E417. Residue N425 is glycosylated (N-linked (GlcNAc...) asparagine). A beta-D-glucoside-binding positions include W467, 474 to 475 (EW), and F483.

It belongs to the glycosyl hydrolase 1 family.

It carries out the reaction Hydrolysis of terminal, non-reducing beta-D-glucosyl residues with release of beta-D-glucose.. This is Beta-glucosidase 32 from Arabidopsis thaliana (Mouse-ear cress).